A 522-amino-acid polypeptide reads, in one-letter code: MSEDKITGTLAFTVFTAVLGSFQFGYDIGVINAPQEVIISHYRHVLGVPLDDRRATINYDINGTDTPLIVTPAHTTPDAWEEETEGSAHIVTMLWSLSVSSFAVGGMVASFFGGWLGDKLGRIKAMLAANSLSLTGALLMGCSKFGPAHALIIAGRSVSGLYCGLISGLVPMYIGEIAPTTLRGALGTLHQLALVTGILISQIAGLSFILGNQDYWHILLGLSAVPALLQCLLLLFCPESPRYLYLNLEEEVRAKKSLKRLRGTEDITKDINEMRKEKEEASTEQKVSVIQLFTDPNYRQPIVVALMLHLAQQFSGINGIFYYSTSIFQTAGISQPVYATIGVGAINMIFTAVSVLLVEKAGRRTLFLAGMIGMFFCAVFMSLGLVLLDKFTWMSYVSMTAIFLFVSFFEIGPGPIPWFMVAEFFSQGPRPTALALAAFSNWVCNFIIALCFQYIADFLGPYVFFLFAGVVLVFTLFTFFKVPETKGKSFDEIAAEFRKKSGSAPPRKATVQMEFLGSSETV.

The Cytoplasmic portion of the chain corresponds to 1 to 10; sequence MSEDKITGTL. A helical transmembrane segment spans residues 11–31; sequence AFTVFTAVLGSFQFGYDIGVI. Topologically, residues 32-96 are extracellular; the sequence is NAPQEVIISH…SAHIVTMLWS (65 aa). An N-linked (GlcNAc...) asparagine glycan is attached at N62. Residues 97 to 117 traverse the membrane as a helical segment; it reads LSVSSFAVGGMVASFFGGWLG. The Cytoplasmic segment spans residues 118–125; the sequence is DKLGRIKA. A helical membrane pass occupies residues 126-146; the sequence is MLAANSLSLTGALLMGCSKFG. Residues 147–156 are Extracellular-facing; it reads PAHALIIAGR. Residues 157–177 traverse the membrane as a helical segment; it reads SVSGLYCGLISGLVPMYIGEI. Topologically, residues 178–185 are cytoplasmic; sequence APTTLRGA. Residues 186–206 traverse the membrane as a helical segment; the sequence is LGTLHQLALVTGILISQIAGL. Q191 is a D-glucose binding site. The Extracellular segment spans residues 207-215; the sequence is SFILGNQDY. A helical transmembrane segment spans residues 216–236; the sequence is WHILLGLSAVPALLQCLLLLF. Over 237 to 301 the chain is Cytoplasmic; sequence CPESPRYLYL…LFTDPNYRQP (65 aa). Residues 302–322 traverse the membrane as a helical segment; it reads IVVALMLHLAQQFSGINGIFY. Residues 312 to 313 and N318 each bind D-glucose; that span reads QQ. At 323 to 337 the chain is on the extracellular side; that stretch reads YSTSIFQTAGISQPV. Residues 338–358 form a helical membrane-spanning segment; that stretch reads YATIGVGAINMIFTAVSVLLV. Position 347 (N347) interacts with D-glucose. Residues 359-365 lie on the Cytoplasmic side of the membrane; sequence EKAGRRT. A helical membrane pass occupies residues 366–386; it reads LFLAGMIGMFFCAVFMSLGLV. Topologically, residues 387–401 are extracellular; the sequence is LLDKFTWMSYVSMTA. Residues 402–422 traverse the membrane as a helical segment; the sequence is IFLFVSFFEIGPGPIPWFMVA. Positions 410 and 418 each coordinate D-glucose. Residues 423 to 431 are Cytoplasmic-facing; that stretch reads EFFSQGPRP. A helical transmembrane segment spans residues 432 to 452; it reads TALALAAFSNWVCNFIIALCF. Residues 453-459 are Extracellular-facing; the sequence is QYIADFL. The helical transmembrane segment at 460 to 480 threads the bilayer; sequence GPYVFFLFAGVVLVFTLFTFF. The Cytoplasmic segment spans residues 481–522; sequence KVPETKGKSFDEIAAEFRKKSGSAPPRKATVQMEFLGSSETV. The residue at position 521 (T521) is a Phosphothreonine.

The protein belongs to the major facilitator superfamily. Sugar transporter (TC 2.A.1.1) family. Glucose transporter subfamily. In terms of processing, N-glycosylated; required for stability and retention at the cell surface of pancreatic beta cells. In terms of tissue distribution, present in liver, intestine, kidney and beta-pancreatic islet cells.

It is found in the cell membrane. The enzyme catalyses D-glucose(out) = D-glucose(in). The catalysed reaction is D-fructose(out) = D-fructose(in). It catalyses the reaction L-dehydroascorbate(out) = L-dehydroascorbate(in). It carries out the reaction D-galactose(in) = D-galactose(out). Its activity is regulated as follows. D-glucose and maltose competitively inhibit fructose transport. D-glucose, D-fructose and maltose inhibit deoxyglucose transport. Facilitative hexose transporter that mediates the transport of glucose, fructose and galactose. Likely mediates the bidirectional transfer of glucose across the plasma membrane of hepatocytes and is responsible for uptake of glucose by the beta cells; may comprise part of the glucose-sensing mechanism of the beta cell. May also participate with the Na(+)/glucose cotransporter in the transcellular transport of glucose in the small intestine and kidney. Also able to mediate the transport of dehydroascorbate. The polypeptide is Solute carrier family 2, facilitated glucose transporter member 2 (Rattus norvegicus (Rat)).